A 280-amino-acid polypeptide reads, in one-letter code: 3-methyl-2-oxobutanoate hydroxymethyltransferase (280 aa).

2 residues coordinate Mg(2+): D49 and D88. 3-methyl-2-oxobutanoate is bound by residues 49 to 50, D88, and K118; that span reads DS. Residue E120 coordinates Mg(2+). Residue E186 is the Proton acceptor of the active site.

The protein belongs to the PanB family. In terms of assembly, homodecamer; pentamer of dimers. The cofactor is Mg(2+).

It localises to the cytoplasm. The enzyme catalyses 3-methyl-2-oxobutanoate + (6R)-5,10-methylene-5,6,7,8-tetrahydrofolate + H2O = 2-dehydropantoate + (6S)-5,6,7,8-tetrahydrofolate. It functions in the pathway cofactor biosynthesis; (R)-pantothenate biosynthesis; (R)-pantoate from 3-methyl-2-oxobutanoate: step 1/2. Catalyzes the reversible reaction in which hydroxymethyl group from 5,10-methylenetetrahydrofolate is transferred onto alpha-ketoisovalerate to form ketopantoate. In Ruegeria sp. (strain TM1040) (Silicibacter sp.), this protein is 3-methyl-2-oxobutanoate hydroxymethyltransferase.